The following is a 494-amino-acid chain: Inosine-5'-monophosphate dehydrogenase (494 aa).

CBS domains lie at I93–I154 and M158–M217. NAD(+) is bound by residues D251 and G301–G303. K(+) is bound by residues G303 and G305. S306 is an IMP binding site. Residue C308 participates in K(+) binding. C308 functions as the Thioimidate intermediate in the catalytic mechanism. IMP is bound by residues D341–G343, G364–S365, and Y388–G392. The active-site Proton acceptor is the R406. Residue E421 participates in IMP binding. The K(+) site is built by E475, S476, and H477.

Belongs to the IMPDH/GMPR family. Homotetramer. Requires K(+) as cofactor.

The catalysed reaction is IMP + NAD(+) + H2O = XMP + NADH + H(+). Its pathway is purine metabolism; XMP biosynthesis via de novo pathway; XMP from IMP: step 1/1. Its activity is regulated as follows. Mycophenolic acid (MPA) is a non-competitive inhibitor that prevents formation of the closed enzyme conformation by binding to the same site as the amobile flap. In contrast, mizoribine monophosphate (MZP) is a competitive inhibitor that induces the closed conformation. MPA is a potent inhibitor of mammalian IMPDHs but a poor inhibitor of the bacterial enzymes. MZP is a more potent inhibitor of bacterial IMPDH. Catalyzes the conversion of inosine 5'-phosphate (IMP) to xanthosine 5'-phosphate (XMP), the first committed and rate-limiting step in the de novo synthesis of guanine nucleotides, and therefore plays an important role in the regulation of cell growth. This chain is Inosine-5'-monophosphate dehydrogenase, found in Chlorobaculum parvum (strain DSM 263 / NCIMB 8327) (Chlorobium vibrioforme subsp. thiosulfatophilum).